A 380-amino-acid polypeptide reads, in one-letter code: MGIHGLAKLIADQAPGAIKEQEMKNFFGRKIAIDASMCIYQFLIAVRQDGNVLQNEDGETTSHLMGMFYRTIRMLENGIKPVYVFDGKPPQLKSGELEKRGERRAEAEKLLAQAQEAGEQENIDKFSKRLVKVTRQHNDECKKLLTLMGVPYVEAPCEAEASCAALVKAGKVFATATEDMDGLTFGTGVLLRHLTASEAKKLPIQEFHFSRILQDIGLSHEQFIDLCILLGCDYCGTIKGIGPKRAMDLIRQHGSIEEILDNIDLSKHPVPEDWLYKEARGLFLTPDVVDCSCLELKWSEPDEEGLVQFMCAEKQFSEDRMRNGCKKILKSRQGSTQGRLDSFFSVTGSLSSKRKEPEMKGSTKKKLKTGATAGKFKKGK.

Residues 1 to 104 (MGIHGLAKLI…GELEKRGERR (104 aa)) form an N-domain region. Residue aspartate 34 participates in Mg(2+) binding. DNA is bound by residues arginine 47 and arginine 70. Mg(2+) contacts are provided by aspartate 86, glutamate 158, glutamate 160, aspartate 179, and aspartate 181. Positions 122–253 (NIDKFSKRLV…KRAMDLIRQH (132 aa)) are I-domain. Residue glutamate 158 coordinates DNA. Positions 231 and 233 each coordinate DNA. Position 233 (aspartate 233) interacts with Mg(2+). The interaction with PCNA stretch occupies residues 336–344 (TQGRLDSFF). Residues 348–380 (GSLSSKRKEPEMKGSTKKKLKTGATAGKFKKGK) are disordered.

Belongs to the XPG/RAD2 endonuclease family. FEN1 subfamily. In terms of assembly, interacts with PCNA. Three molecules of fen1 bind to one PCNA trimer with each molecule binding to one PCNA monomer. PCNA stimulates the nuclease activity without altering cleavage specificity. The cofactor is Mg(2+). In terms of processing, phosphorylated. Phosphorylation upon DNA damage induces relocalization to the nuclear plasma.

The protein resides in the nucleus. It is found in the nucleolus. It localises to the nucleoplasm. Its subcellular location is the mitochondrion. Functionally, structure-specific nuclease with 5'-flap endonuclease and 5'-3' exonuclease activities involved in DNA replication and repair. During DNA replication, cleaves the 5'-overhanging flap structure that is generated by displacement synthesis when DNA polymerase encounters the 5'-end of a downstream Okazaki fragment. It enters the flap from the 5'-end and then tracks to cleave the flap base, leaving a nick for ligation. Also involved in the long patch base excision repair (LP-BER) pathway, by cleaving within the apurinic/apyrimidinic (AP) site-terminated flap. Acts as a genome stabilization factor that prevents flaps from equilibrating into structures that lead to duplications and deletions. Also possesses 5'-3' exonuclease activity on nicked or gapped double-stranded DNA, and exhibits RNase H activity. Also involved in replication and repair of rDNA and in repairing mitochondrial DNA. This Osmerus mordax (Rainbow smelt) protein is Flap endonuclease 1 (fen1).